The sequence spans 152 residues: Homeobox protein ceh-63 (152 aa).

The span at 21–30 (NDTNSSQQIK) shows a compositional bias: polar residues. Disordered regions lie at residues 21-48 (NDTN…RTTF) and 92-126 (RRTK…SQHV). The segment covering 35–44 (PPKRSNRPTK) has biased composition (basic residues). The segment at residues 41-100 (RPTKRTTFTSEQVTLLELEFAKNEYICKDRRGELAQTIELTECQVKTWFQNRRTKKRRCT) is a DNA-binding region (homeobox). Positions 116–126 (PSPQNPSSQHV) are enriched in polar residues.

In terms of assembly, may interact with homeobox protein ceh-14.

It is found in the nucleus. Its function is as follows. Probable transcription factor, modulating expression of helix-loop-helix protein mbr-1, perhaps acting in concert with homeobox protein ceh-14. May play a minor role in axon guidance in the DVC interneuron. The chain is Homeobox protein ceh-63 from Caenorhabditis elegans.